Reading from the N-terminus, the 273-residue chain is SUMO-1 cysteine protease S273R (273 aa).

Catalysis depends on residues H168 and N187. Q226 lines the substrate pocket. C232 (nucleophile) is an active-site residue.

Belongs to the peptidase C63 family.

Its subcellular location is the host cytoplasm. The protein localises to the virion. Functionally, cysteine protease that plays several role during infection including processing of the structural polyprotein or inhibition of the host immune response. Catalyzes the maturation of the pp220 and pp62 polyprotein precursors into core-shell proteins. Plays a role in the disruption of host pyroptosis via specific cleavage of gasdermin D/GSDMD. In addition, strongly decreases the host cGAS-STING signaling by targeting IKBKE via its enzymatic activity. Also impairs host FOXJ1-mediated antiviral effect via degradation of FOXJ1. The chain is SUMO-1 cysteine protease S273R from Ornithodoros (relapsing fever ticks).